Reading from the N-terminus, the 907-residue chain is Potassium channel AKT3 (907 aa).

Residues 1-75 (MPTTKCAVPL…YDRRYELWNN (75 aa)) are Cytoplasmic-facing. The helical transmembrane segment at 76–96 (YLILLVVYSAWVTPFEFGFVP) threads the bilayer. Topologically, residues 97–102 (EPAGAL) are extracellular. The chain crosses the membrane as a helical span at residues 103–123 (AAADNAVNAFFAVDIVLTFFV). The Cytoplasmic segment spans residues 124-146 (AYTDPKTFLLQDDPRKIALRYIT). Residues 147 to 167 (TWFVLDVVATIPTELARRILP) form a helical membrane-spanning segment. Residues 168–174 (PDLRSYG) lie on the Extracellular side of the membrane. A helical; Voltage-sensor transmembrane segment spans residues 175-195 (FFGILRLWRLHRVGILFARLE). Topologically, residues 196–209 (KDRKFSYFWVRCVK) are cytoplasmic. A helical membrane pass occupies residues 210-230 (LVCVTLFAVHCSACFYYLLAD). The Extracellular portion of the chain corresponds to 231-257 (RYPDPTNTWISAYMPNFHKASIWSRYV). The segment at residues 258–277 (ASMYWSITTLSTVGYGDMHA) is an intramembrane region (pore-forming). The Extracellular segment spans residues 278 to 288 (ENTGEMVFTTT). A helical transmembrane segment spans residues 289-309 (YMLFNLGLTAYIIGNMTNLVV). Topologically, residues 310 to 907 (HGTSRTRKFR…VPPENRSRNQ (598 aa)) are cytoplasmic. 388–512 (LFEGVSNDLI…TIVMNNLIQY (125 aa)) contacts a nucleoside 3',5'-cyclic phosphate. ANK repeat units lie at residues 539–568 (DFPI…DPNE), 572–601 (YGRT…DSNS), 605–634 (EGRV…DLSG), 636–665 (DAAP…DVSG), and 670–699 (DGTT…DADA). 2 disordered regions span residues 726-779 (ATRH…TPQR) and 801-824 (GGYR…SSPP). Positions 754–776 (SSPSSSSRRGRTSSTSAASARST) are enriched in low complexity. Positions 803–812 (YRGGGGGGGA) are enriched in gly residues. Residues 827–907 (RVAISCPESR…VPPENRSRNQ (81 aa)) form the KHA domain.

Belongs to the potassium channel family. Plant (TC 1.A.1.4) subfamily.

The protein resides in the membrane. Its function is as follows. Probable inward-rectifying potassium channel. Assuming opened or closed conformations in response to the voltage difference across the membrane, the channel is activated by hyperpolarization. This chain is Potassium channel AKT3, found in Oryza sativa subsp. japonica (Rice).